The following is a 174-amino-acid chain: Stigma-specific STIG1-like protein 4 (174 aa).

A signal peptide spans 1-25 (MMSIKLTLCALIFFLLNSLLHHVLG). The disordered stretch occupies residues 140 to 174 (PSSQPGKRHRRHKFHRPRPPPSPDSKLNYDDHDDE). Residues 145-157 (GKRHRRHKFHRPR) show a composition bias toward basic residues.

Belongs to the STIG1 family.

The protein localises to the secreted. Endosperm-specific cysteine-rich protein that acts downstream of BHLH95/ZOU to modify the interface between embryo and endosperm and mediate the separation of these two tissues during seed development. Necessary for the biogenesis of the embryo sheath, an extracuticular endosperm-derived structure at the surface of the embryo. Required for the separation of embryo and endosperm, and for normal progression of the embryo through the endosperm tissue. Required for the formation of a normal embryonic cuticle. The polypeptide is Stigma-specific STIG1-like protein 4 (Arabidopsis thaliana (Mouse-ear cress)).